Reading from the N-terminus, the 188-residue chain is FMN reductase (NADH) RutF (188 aa).

Belongs to the non-flavoprotein flavin reductase family. RutF subfamily.

It carries out the reaction FMNH2 + NAD(+) = FMN + NADH + 2 H(+). Its function is as follows. Catalyzes the reduction of FMN to FMNH2 which is used to reduce pyrimidine by RutA via the Rut pathway. The chain is FMN reductase (NADH) RutF from Acinetobacter baylyi (strain ATCC 33305 / BD413 / ADP1).